A 226-amino-acid chain; its full sequence is Large ribosomal subunit protein uL3 (226 aa).

The segment at 135 to 158 (MSSQRASHGNSRSHNVPGSIGMAQ) is disordered. Over residues 137 to 150 (SQRASHGNSRSHNV) the composition is skewed to polar residues. At Gln158 the chain carries N5-methylglutamine.

The protein belongs to the universal ribosomal protein uL3 family. In terms of assembly, part of the 50S ribosomal subunit. Forms a cluster with proteins L14 and L19. Post-translationally, methylated by PrmB.

One of the primary rRNA binding proteins, it binds directly near the 3'-end of the 23S rRNA, where it nucleates assembly of the 50S subunit. The chain is Large ribosomal subunit protein uL3 from Polaromonas naphthalenivorans (strain CJ2).